A 292-amino-acid polypeptide reads, in one-letter code: ER membrane protein complex subunit 2 (292 aa).

The TPR repeat unit spans residues 163–196 (AELWWYASEIYFEMGQFEKACYCLEQVLCITPFN).

It belongs to the EMC2 family. Component of the ER membrane protein complex (EMC), which is composed of EMC1, EMC2, EMC3, EMC4, EMC5 and EMC6.

It is found in the endoplasmic reticulum membrane. Its function is as follows. Part of the endoplasmic reticulum membrane protein complex (EMC) that enables the energy-independent insertion into endoplasmic reticulum membranes of newly synthesized membrane proteins. Preferentially accommodates proteins with transmembrane domains that are weakly hydrophobic or contain destabilizing features such as charged and aromatic residues. Involved in the cotranslational insertion of multi-pass membrane proteins in which stop-transfer membrane-anchor sequences become ER membrane spanning helices. It is also required for the post-translational insertion of tail-anchored/TA proteins in endoplasmic reticulum membranes. By mediating the proper cotranslational insertion of N-terminal transmembrane domains in an N-exo topology, with translocated N-terminus in the lumen of the ER, controls the topology of multi-pass membrane proteins. The sequence is that of ER membrane protein complex subunit 2 (EMC2) from Saccharomyces cerevisiae (strain ATCC 204508 / S288c) (Baker's yeast).